The sequence spans 335 residues: Galactinol synthase 2 (335 aa).

K103 is an active-site residue. D119, D121, and H257 together coordinate Mn(2+).

Belongs to the glycosyltransferase 8 family. Galactosyltransferase subfamily. Requires a divalent metal cation as cofactor. Accumulates in mature seeds.

It localises to the cytoplasm. It carries out the reaction myo-inositol + UDP-alpha-D-galactose = alpha-D-galactosyl-(1-&gt;3)-1D-myo-inositol + UDP + H(+). In terms of biological role, galactinol synthase involved in the biosynthesis of raffinose family oligosaccharides (RFOs) that function as osmoprotectants. Promotes stress tolerance of factors such as drought, chilling, salinity and methylviologen (MV), a superoxide radical generating drug, by mediating an increase in levels of the endogenous osmoprotective compounds, galactinol and raffinose. This Arabidopsis thaliana (Mouse-ear cress) protein is Galactinol synthase 2 (GOLS2).